A 150-amino-acid polypeptide reads, in one-letter code: Large ribosomal subunit protein bL9 (150 aa).

Belongs to the bacterial ribosomal protein bL9 family.

Binds to the 23S rRNA. This is Large ribosomal subunit protein bL9 from Neisseria gonorrhoeae.